Consider the following 364-residue polypeptide: UDP-N-acetylglucosamine--N-acetylmuramyl-(pentapeptide) pyrophosphoryl-undecaprenol N-acetylglucosamine transferase (364 aa).

Residues 10-12 (TGG), Asn-124, Arg-166, Ser-196, Ile-252, and Gln-297 each bind UDP-N-acetyl-alpha-D-glucosamine.

Belongs to the glycosyltransferase 28 family. MurG subfamily.

The protein resides in the cell membrane. It carries out the reaction di-trans,octa-cis-undecaprenyl diphospho-N-acetyl-alpha-D-muramoyl-L-alanyl-D-glutamyl-meso-2,6-diaminopimeloyl-D-alanyl-D-alanine + UDP-N-acetyl-alpha-D-glucosamine = di-trans,octa-cis-undecaprenyl diphospho-[N-acetyl-alpha-D-glucosaminyl-(1-&gt;4)]-N-acetyl-alpha-D-muramoyl-L-alanyl-D-glutamyl-meso-2,6-diaminopimeloyl-D-alanyl-D-alanine + UDP + H(+). It participates in cell wall biogenesis; peptidoglycan biosynthesis. Cell wall formation. Catalyzes the transfer of a GlcNAc subunit on undecaprenyl-pyrophosphoryl-MurNAc-pentapeptide (lipid intermediate I) to form undecaprenyl-pyrophosphoryl-MurNAc-(pentapeptide)GlcNAc (lipid intermediate II). This chain is UDP-N-acetylglucosamine--N-acetylmuramyl-(pentapeptide) pyrophosphoryl-undecaprenol N-acetylglucosamine transferase, found in Ruminiclostridium cellulolyticum (strain ATCC 35319 / DSM 5812 / JCM 6584 / H10) (Clostridium cellulolyticum).